We begin with the raw amino-acid sequence, 464 residues long: tRNA modification GTPase MnmE (464 aa).

(6S)-5-formyl-5,6,7,8-tetrahydrofolate-binding residues include R27, E89, and R128. The TrmE-type G domain occupies 225–384 (GLATAIVGRP…LEETIAHLFF (160 aa)). N235 serves as a coordination point for K(+). GTP is bound by residues 235-240 (NVGKSS), 254-260 (TDVAGTT), and 279-282 (DTAG). S239 provides a ligand contact to Mg(2+). K(+) is bound by residues T254, V256, and T259. A Mg(2+)-binding site is contributed by T260. K464 contributes to the (6S)-5-formyl-5,6,7,8-tetrahydrofolate binding site.

Belongs to the TRAFAC class TrmE-Era-EngA-EngB-Septin-like GTPase superfamily. TrmE GTPase family. Homodimer. Heterotetramer of two MnmE and two MnmG subunits. K(+) is required as a cofactor.

It is found in the cytoplasm. Its function is as follows. Exhibits a very high intrinsic GTPase hydrolysis rate. Involved in the addition of a carboxymethylaminomethyl (cmnm) group at the wobble position (U34) of certain tRNAs, forming tRNA-cmnm(5)s(2)U34. This is tRNA modification GTPase MnmE from Levilactobacillus brevis (strain ATCC 367 / BCRC 12310 / CIP 105137 / JCM 1170 / LMG 11437 / NCIMB 947 / NCTC 947) (Lactobacillus brevis).